A 685-amino-acid chain; its full sequence is Glycine--tRNA ligase beta subunit (685 aa).

Belongs to the class-II aminoacyl-tRNA synthetase family. In terms of assembly, tetramer of two alpha and two beta subunits.

The protein resides in the cytoplasm. It catalyses the reaction tRNA(Gly) + glycine + ATP = glycyl-tRNA(Gly) + AMP + diphosphate. This is Glycine--tRNA ligase beta subunit from Azotobacter vinelandii (strain DJ / ATCC BAA-1303).